The primary structure comprises 246 residues: MKGAVQQEPAYVVHRRPWRETALLVDLFTLNHGRMSVVARGANSTKSPLKAQLQPFQPLLVDWTGKSELKTLVQLEVRSAPAVSQPRALYSGFYINELVQRVLPVADPSPALFASYIETLQALADLSSQDDVEPLLRRFERAFAASLGYDFAWDETTDTGMSVQAGELYGYDPGQGIVSNLAPELPLRQLPGEALLALAAGDFISEAPRKTAKRVMRVLVDYLLQGRPLHSRSLFSHSNPSSGRES.

It belongs to the RecO family.

Its function is as follows. Involved in DNA repair and RecF pathway recombination. The protein is DNA repair protein RecO of Marinobacter nauticus (strain ATCC 700491 / DSM 11845 / VT8) (Marinobacter aquaeolei).